Consider the following 426-residue polypeptide: 3-phosphoshikimate 1-carboxyvinyltransferase (426 aa).

3 residues coordinate 3-phosphoshikimate: Lys-22, Ser-23, and Arg-27. Position 22 (Lys-22) interacts with phosphoenolpyruvate. Residues Gly-96 and Arg-124 each coordinate phosphoenolpyruvate. Residues Ser-170, Ser-171, Gln-172, Ser-198, Asp-314, Asn-337, and Lys-341 each contribute to the 3-phosphoshikimate site. Position 172 (Gln-172) interacts with phosphoenolpyruvate. Asp-314 serves as the catalytic Proton acceptor. Phosphoenolpyruvate is bound by residues Arg-345, Arg-387, and Lys-412.

The protein belongs to the EPSP synthase family. Monomer.

The protein resides in the cytoplasm. The catalysed reaction is 3-phosphoshikimate + phosphoenolpyruvate = 5-O-(1-carboxyvinyl)-3-phosphoshikimate + phosphate. Its pathway is metabolic intermediate biosynthesis; chorismate biosynthesis; chorismate from D-erythrose 4-phosphate and phosphoenolpyruvate: step 6/7. In terms of biological role, catalyzes the transfer of the enolpyruvyl moiety of phosphoenolpyruvate (PEP) to the 5-hydroxyl of shikimate-3-phosphate (S3P) to produce enolpyruvyl shikimate-3-phosphate and inorganic phosphate. The polypeptide is 3-phosphoshikimate 1-carboxyvinyltransferase (Shewanella baltica (strain OS185)).